The sequence spans 211 residues: ATP phosphoribosyltransferase (211 aa).

Belongs to the ATP phosphoribosyltransferase family. Short subfamily. As to quaternary structure, heteromultimer composed of HisG and HisZ subunits.

The protein localises to the cytoplasm. The enzyme catalyses 1-(5-phospho-beta-D-ribosyl)-ATP + diphosphate = 5-phospho-alpha-D-ribose 1-diphosphate + ATP. Its pathway is amino-acid biosynthesis; L-histidine biosynthesis; L-histidine from 5-phospho-alpha-D-ribose 1-diphosphate: step 1/9. Catalyzes the condensation of ATP and 5-phosphoribose 1-diphosphate to form N'-(5'-phosphoribosyl)-ATP (PR-ATP). Has a crucial role in the pathway because the rate of histidine biosynthesis seems to be controlled primarily by regulation of HisG enzymatic activity. This chain is ATP phosphoribosyltransferase, found in Clostridium botulinum (strain 657 / Type Ba4).